Here is a 487-residue protein sequence, read N- to C-terminus: Melanopsin (487 aa).

The segment at 1–37 is disordered; sequence MNPPSGPRTQEPSCVATPASPSRWDGYRSSTSSLDQP. Over 1–67 the chain is Extracellular; sequence MNPPSGPRTQ…VDVPDHAHYT (67 aa). A helical membrane pass occupies residues 68–88; the sequence is LGTVILLVGLTGILGNLMVIY. Over 89 to 102 the chain is Cytoplasmic; that stretch reads TFCRSRGLRTPANM. A helical membrane pass occupies residues 103 to 123; the sequence is FIINLAVSDFFMSFTQAPVFF. At 124 to 139 the chain is on the extracellular side; that stretch reads ASSLHKRWLFGEAGCE. Cysteine 138 and cysteine 216 are disulfide-bonded. A helical membrane pass occupies residues 140–160; it reads FYAFCGALFGITSMITLMAIA. The Cytoplasmic segment spans residues 161 to 183; that stretch reads LDRYLVITHPLATIGVVSKRRAA. A helical membrane pass occupies residues 184–204; it reads LVLLGVWLYALAWSLPPFFGW. Topologically, residues 205 to 233 are extracellular; that stretch reads SAYVPEGLLTSCSWDYMSFTPSVRAYTML. The chain crosses the membrane as a helical span at residues 234–254; sequence LFCFVFFLPLLVIVYCYIFIF. Topologically, residues 255 to 291 are cytoplasmic; that stretch reads RAIRETGQALQTFRACEGGGRSPRQRQRLQREWKMAK. A helical membrane pass occupies residues 292–312; it reads IELLVILLFVLSWAPYSIVAL. The Extracellular portion of the chain corresponds to 313–327; sequence MAFAGYAHVLTPYMN. Residues 328-348 form a helical membrane-spanning segment; sequence SVPAVIAKASAIHNPIIYAIT. Lysine 335 is modified (N6-(retinylidene)lysine). Residues 349–487 lie on the Cytoplasmic side of the membrane; that stretch reads HPKYRMAIAQ…LPLHPGWAFH (139 aa). Residues 436–459 form a disordered region; that stretch reads CSQGLEDREAKAPVRPQGREAETP. Basic and acidic residues predominate over residues 440-457; the sequence is LEDREAKAPVRPQGREAE.

It belongs to the G-protein coupled receptor 1 family. Opsin subfamily. As to expression, eye. Expression is restricted within the ganglion cell layer.

The protein resides in the cell membrane. The protein localises to the cell projection. It localises to the axon. It is found in the dendrite. Its subcellular location is the perikaryon. In terms of biological role, photoreceptor that binds cis-retinaldehydes. Contributes to pupillar reflex, photoentrainment and other non-image forming responses to light. May be involved in the optokinetic visual tracking response. May be involved in the regulation of retinal hyaloid vessel growth and regression. The polypeptide is Melanopsin (OPN4) (Felis catus (Cat)).